The sequence spans 446 residues: Trigger factor (446 aa).

Positions Gly-163–Leu-248 constitute a PPIase FKBP-type domain.

Belongs to the FKBP-type PPIase family. Tig subfamily.

It is found in the cytoplasm. The catalysed reaction is [protein]-peptidylproline (omega=180) = [protein]-peptidylproline (omega=0). Its function is as follows. Involved in protein export. Acts as a chaperone by maintaining the newly synthesized protein in an open conformation. Functions as a peptidyl-prolyl cis-trans isomerase. The polypeptide is Trigger factor (Natranaerobius thermophilus (strain ATCC BAA-1301 / DSM 18059 / JW/NM-WN-LF)).